We begin with the raw amino-acid sequence, 183 residues long: NADH-quinone oxidoreductase subunit I (183 aa).

4Fe-4S ferredoxin-type domains lie at 71–100 (KRDE…MKAA) and 117–146 (EIYE…LTTS). [4Fe-4S] cluster-binding residues include Cys80, Cys83, Cys86, Cys90, Cys126, Cys129, Cys132, and Cys136.

This sequence belongs to the complex I 23 kDa subunit family. NDH-1 is composed of 14 different subunits. Subunits NuoA, H, J, K, L, M, N constitute the membrane sector of the complex. [4Fe-4S] cluster is required as a cofactor.

It is found in the cell inner membrane. The enzyme catalyses a quinone + NADH + 5 H(+)(in) = a quinol + NAD(+) + 4 H(+)(out). Functionally, NDH-1 shuttles electrons from NADH, via FMN and iron-sulfur (Fe-S) centers, to quinones in the respiratory chain. The immediate electron acceptor for the enzyme in this species is believed to be ubiquinone. Couples the redox reaction to proton translocation (for every two electrons transferred, four hydrogen ions are translocated across the cytoplasmic membrane), and thus conserves the redox energy in a proton gradient. This is NADH-quinone oxidoreductase subunit I from Flavobacterium psychrophilum (strain ATCC 49511 / DSM 21280 / CIP 103535 / JIP02/86).